A 106-amino-acid polypeptide reads, in one-letter code: UPF0145 protein APJL_0492 (106 aa).

This sequence belongs to the UPF0145 family.

This is UPF0145 protein APJL_0492 from Actinobacillus pleuropneumoniae serotype 3 (strain JL03).